Here is a 74-residue protein sequence, read N- to C-terminus: EMBRYO SURROUNDING FACTOR 1-like protein 4 (74 aa).

An N-terminal signal peptide occupies residues 1 to 22 (MKSSHAYLVCILLLSLFSLHQC). 4 disulfides stabilise this stretch: C36–C51, C41–C70, C49–C66, and C52–C59.

Belongs to the MEG family. Expressed in flowers.

This Arabidopsis thaliana (Mouse-ear cress) protein is EMBRYO SURROUNDING FACTOR 1-like protein 4 (ESFL4).